The chain runs to 467 residues: GTPase Der (467 aa).

2 consecutive EngA-type G domains span residues 25–188 and 199–372; these read PVVA…PEAP and RRVA…ASWE. Residues 31–38, 78–82, 140–143, 205–212, 252–256, and 317–320 each bind GTP; these read GRPNVGKS, DTGGW, NKAD, DTAGL, and NKWD. The KH-like domain occupies 373–455; sequence TRVPTAQLNA…PIEISVRARK (83 aa).

The protein belongs to the TRAFAC class TrmE-Era-EngA-EngB-Septin-like GTPase superfamily. EngA (Der) GTPase family. As to quaternary structure, associates with the 50S ribosomal subunit.

Its function is as follows. GTPase that plays an essential role in the late steps of ribosome biogenesis. In Salinispora tropica (strain ATCC BAA-916 / DSM 44818 / JCM 13857 / NBRC 105044 / CNB-440), this protein is GTPase Der.